A 90-amino-acid polypeptide reads, in one-letter code: Probable Fe(2+)-trafficking protein (90 aa).

This sequence belongs to the Fe(2+)-trafficking protein family. In terms of assembly, monomer.

Its function is as follows. Could be a mediator in iron transactions between iron acquisition and iron-requiring processes, such as synthesis and/or repair of Fe-S clusters in biosynthetic enzymes. The chain is Probable Fe(2+)-trafficking protein from Pectobacterium atrosepticum (strain SCRI 1043 / ATCC BAA-672) (Erwinia carotovora subsp. atroseptica).